The primary structure comprises 270 residues: Formamidopyrimidine-DNA glycosylase (270 aa).

P2 functions as the Schiff-base intermediate with DNA in the catalytic mechanism. Catalysis depends on E3, which acts as the Proton donor. The active-site Proton donor; for beta-elimination activity is K56. Residues H89, R107, and R151 each contribute to the DNA site. The FPG-type zinc finger occupies 236 to 270; that stretch reads TVYGRAGEPCRVCATPIRLLRQGQRSTYYCPNCQK. R260 functions as the Proton donor; for delta-elimination activity in the catalytic mechanism.

It belongs to the FPG family. In terms of assembly, monomer. The cofactor is Zn(2+).

It carries out the reaction Hydrolysis of DNA containing ring-opened 7-methylguanine residues, releasing 2,6-diamino-4-hydroxy-5-(N-methyl)formamidopyrimidine.. The catalysed reaction is 2'-deoxyribonucleotide-(2'-deoxyribose 5'-phosphate)-2'-deoxyribonucleotide-DNA = a 3'-end 2'-deoxyribonucleotide-(2,3-dehydro-2,3-deoxyribose 5'-phosphate)-DNA + a 5'-end 5'-phospho-2'-deoxyribonucleoside-DNA + H(+). Functionally, involved in base excision repair of DNA damaged by oxidation or by mutagenic agents. Acts as a DNA glycosylase that recognizes and removes damaged bases. Has a preference for oxidized purines, such as 7,8-dihydro-8-oxoguanine (8-oxoG). Has AP (apurinic/apyrimidinic) lyase activity and introduces nicks in the DNA strand. Cleaves the DNA backbone by beta-delta elimination to generate a single-strand break at the site of the removed base with both 3'- and 5'-phosphates. The protein is Formamidopyrimidine-DNA glycosylase of Variovorax paradoxus (strain S110).